Here is a 310-residue protein sequence, read N- to C-terminus: Ribosomal protein uL3 glutamine methyltransferase (310 aa).

It belongs to the protein N5-glutamine methyltransferase family. PrmB subfamily.

It carries out the reaction L-glutaminyl-[ribosomal protein uL3] + S-adenosyl-L-methionine = N(5)-methyl-L-glutaminyl-[ribosomal protein uL3] + S-adenosyl-L-homocysteine + H(+). In terms of biological role, methylates large ribosomal subunit protein uL3 on a specific glutamine residue. This Vibrio anguillarum (strain ATCC 68554 / 775) (Listonella anguillarum) protein is Ribosomal protein uL3 glutamine methyltransferase.